The following is a 331-amino-acid chain: Dof zinc finger protein DOF1.1 (331 aa).

The Dof-type zinc finger occupies 77 to 131 (LKCPRCDSSNTKFCYYNNYNLTQPRHFCKGCRRYWTQGGALRNVPVGGGCRRNNK). 4 residues coordinate Zn(2+): Cys79, Cys82, Cys104, and Cys107. 2 disordered regions span residues 121 to 166 (PVGG…TNHQ) and 291 to 331 (EEQP…NDLL). Positions 135–160 (NGNLKSSSSSSKQSSSVNAQSPSSGQ) are enriched in low complexity. A compositionally biased stretch (polar residues) spans 305-316 (GLTSPGNQTNQY).

In terms of assembly, interacts with OBF4. Expressed in the vasculature (mainly in the phloem and associated cell files) of cotyledons, leaves, roots, flower stalks and petals. The PEAR proteins (e.g. DOF2.4, DOF5.1, DOF3.2, DOF1.1, DOF5.6 and DOF5.3) form a short-range concentration gradient that peaks at protophloem sieve elements (PSE).

The protein resides in the nucleus. Transcription factor that binds specifically to a 5'-AA[AG]G-3' consensus core sequence. Enhances the DNA binding of OBF transcription factors to OCS elements. Involved in the regulation of root development. The PEAR proteins (e.g. DOF2.4, DOF5.1, DOF3.2, DOF1.1, DOF5.6 and DOF5.3) activate gene expression that promotes radial growth of protophloem sieve elements. Element of a regulatory network controlling indole glucosinolates (IGS) biosynthesis, probably by inducing the expression of accurate genes (e.g. CYP83B1). Promotes apical dominance. The chain is Dof zinc finger protein DOF1.1 from Arabidopsis thaliana (Mouse-ear cress).